The primary structure comprises 106 residues: Urease subunit beta (106 aa).

Belongs to the urease beta subunit family. In terms of assembly, heterotrimer of UreA (gamma), UreB (beta) and UreC (alpha) subunits. Three heterotrimers associate to form the active enzyme.

It localises to the cytoplasm. The enzyme catalyses urea + 2 H2O + H(+) = hydrogencarbonate + 2 NH4(+). Its pathway is nitrogen metabolism; urea degradation; CO(2) and NH(3) from urea (urease route): step 1/1. The polypeptide is Urease subunit beta (Acinetobacter baumannii (strain SDF)).